A 123-amino-acid polypeptide reads, in one-letter code: Integration host factor subunit alpha (123 aa).

A disordered region spans residues 97-123; it reads NANGSAPSMSSSASAVDDDKSESASRT. Positions 98 to 111 are enriched in low complexity; the sequence is ANGSAPSMSSSASA. A compositionally biased stretch (basic and acidic residues) spans 113–123; it reads DDDKSESASRT.

The protein belongs to the bacterial histone-like protein family. As to quaternary structure, heterodimer of an alpha and a beta chain.

This protein is one of the two subunits of integration host factor, a specific DNA-binding protein that functions in genetic recombination as well as in transcriptional and translational control. The polypeptide is Integration host factor subunit alpha (Rhodopseudomonas palustris (strain BisB5)).